Reading from the N-terminus, the 651-residue chain is Acid beta-fructofuranosidase (651 aa).

Over 1–23 (MEHHKPLLPTSSHAAPNPRTRKD) the chain is Cytoplasmic. Positions 1-103 (MEHHKPLLPT…LFSGEGGASE (103 aa)) are cleaved as a propeptide — removed in mature form. The helical; Signal-anchor for type II membrane protein transmembrane segment at 24-44 (LLLLLCALLFLSSLVAFGRNR) threads the bilayer. Over 45 to 651 (ASNVPHDHVS…PFPFNPDQKN (607 aa)) the chain is Lumenal. The disordered stretch occupies residues 48–76 (VPHDHVSSSASNHQQEHQSPTSLPSSKWH). The segment covering 54 to 72 (SSSASNHQQEHQSPTSLPS) has biased composition (polar residues). Residues 127–130 (WMND), Q146, W154, and 189–190 (WT) each bind substrate. D130 is an active-site residue. N210 carries N-linked (GlcNAc...) asparagine glycosylation. Substrate is bound at residue 253–254 (RD). N275 is a glycosylation site (N-linked (GlcNAc...) asparagine). Residues E308 and D343 each coordinate substrate. The cysteines at positions 500 and 548 are disulfide-linked. N620 is a glycosylation site (N-linked (GlcNAc...) asparagine).

The protein belongs to the glycosyl hydrolase 32 family. May be present in two forms, a 70 kDa monomer and a heterodimer of the 30 kDa and 38 kDa subunits. The ratio of the levels of the two forms within cells appears to be regulated developmentally.

The protein resides in the membrane. The protein localises to the vacuole lumen. It carries out the reaction Hydrolysis of terminal non-reducing beta-D-fructofuranoside residues in beta-D-fructofuranosides.. It functions in the pathway glycan biosynthesis; sucrose metabolism. The sequence is that of Acid beta-fructofuranosidase from Phaseolus vulgaris (Kidney bean).